A 216-amino-acid chain; its full sequence is Adenylate kinase (216 aa).

10–15 (GAGKGT) contributes to the ATP binding site. Residues 30–59 (STGDMLREAVKADTPLGIEAKKVMDVGGLI) are NMP. AMP is bound by residues T31, R36, 57–59 (GLI), 85–88 (GFPR), and Q92. Positions 122 to 159 (GRRAHLTSGRTYHIVYNPPKVEGIDDITGEELIQRTDD) are LID. ATP-binding positions include R123 and 132–133 (TY). The AMP site is built by R156 and R167. ATP is bound at residue G202.

This sequence belongs to the adenylate kinase family. In terms of assembly, monomer.

The protein resides in the cytoplasm. The catalysed reaction is AMP + ATP = 2 ADP. It participates in purine metabolism; AMP biosynthesis via salvage pathway; AMP from ADP: step 1/1. Catalyzes the reversible transfer of the terminal phosphate group between ATP and AMP. Plays an important role in cellular energy homeostasis and in adenine nucleotide metabolism. This Ruthia magnifica subsp. Calyptogena magnifica protein is Adenylate kinase.